The chain runs to 337 residues: Eukaryotic translation initiation factor 3 subunit H (337 aa).

Positions 21 to 153 (VQCDGLAVMK…LKAYRLTPQA (133 aa)) constitute an MPN domain.

Belongs to the eIF-3 subunit H family. In terms of assembly, component of the eukaryotic translation initiation factor 3 (eIF-3) complex. The eIF-3 complex interacts with pix. Interacts with mxt.

Its subcellular location is the cytoplasm. Its function is as follows. Component of the eukaryotic translation initiation factor 3 (eIF-3) complex, which is involved in protein synthesis of a specialized repertoire of mRNAs and, together with other initiation factors, stimulates binding of mRNA and methionyl-tRNAi to the 40S ribosome. The eIF-3 complex specifically targets and initiates translation of a subset of mRNAs involved in cell proliferation. This Drosophila grimshawi (Hawaiian fruit fly) protein is Eukaryotic translation initiation factor 3 subunit H.